The chain runs to 500 residues: Phenylalanine--tRNA ligase alpha subunit (500 aa).

L-phenylalanine is bound by residues Thr-343, 382–384, and Phe-423; that span reads QID. A Mg(2+)-binding site is contributed by Glu-425. Residue Phe-448 coordinates L-phenylalanine.

It belongs to the class-II aminoacyl-tRNA synthetase family. Phe-tRNA synthetase alpha subunit type 2 subfamily. In terms of assembly, tetramer of two alpha and two beta subunits. Mg(2+) is required as a cofactor.

Its subcellular location is the cytoplasm. It catalyses the reaction tRNA(Phe) + L-phenylalanine + ATP = L-phenylalanyl-tRNA(Phe) + AMP + diphosphate + H(+). This chain is Phenylalanine--tRNA ligase alpha subunit, found in Pyrococcus abyssi (strain GE5 / Orsay).